Here is a 459-residue protein sequence, read N- to C-terminus: Ribulose bisphosphate carboxylase (459 aa).

Residue Asn111 coordinates substrate. The active-site Proton acceptor is Lys166. Substrate is bound at residue Lys168. The Mg(2+) site is built by Lys191, Asp193, and Glu194. Lys191 carries the N6-carboxylysine modification. His287 acts as the Proton acceptor in catalysis. Positions 288, 321, and 368 each coordinate substrate.

It belongs to the RuBisCO large chain family. Type II subfamily. In terms of assembly, homodimer. It depends on Mg(2+) as a cofactor.

It catalyses the reaction 2 (2R)-3-phosphoglycerate + 2 H(+) = D-ribulose 1,5-bisphosphate + CO2 + H2O. It carries out the reaction D-ribulose 1,5-bisphosphate + O2 = 2-phosphoglycolate + (2R)-3-phosphoglycerate + 2 H(+). Functionally, ruBisCO catalyzes two reactions: the carboxylation of D-ribulose 1,5-bisphosphate, the primary event in carbon dioxide fixation, as well as the oxidative fragmentation of the pentose substrate. Both reactions occur simultaneously and in competition at the same active site. The chain is Ribulose bisphosphate carboxylase from Cereibacter sphaeroides (Rhodobacter sphaeroides).